Reading from the N-terminus, the 174-residue chain is NADH-ubiquinone oxidoreductase chain 6 (174 aa).

The next 4 helical transmembrane spans lie at 24–44 (LALG…TGLM), 53–73 (ILFL…TSLA), 82–102 (MKLT…SFIM), and 143–163 (FITI…VKIT).

It belongs to the complex I subunit 6 family.

It is found in the mitochondrion membrane. The enzyme catalyses a ubiquinone + NADH + 5 H(+)(in) = a ubiquinol + NAD(+) + 4 H(+)(out). In terms of biological role, core subunit of the mitochondrial membrane respiratory chain NADH dehydrogenase (Complex I) that is believed to belong to the minimal assembly required for catalysis. Complex I functions in the transfer of electrons from NADH to the respiratory chain. The immediate electron acceptor for the enzyme is believed to be ubiquinone. The polypeptide is NADH-ubiquinone oxidoreductase chain 6 (mt:ND6) (Drosophila melanogaster (Fruit fly)).